A 123-amino-acid polypeptide reads, in one-letter code: Small ribosomal subunit protein uS12 (123 aa).

Asp-89 bears the 3-methylthioaspartic acid mark.

Belongs to the universal ribosomal protein uS12 family. Part of the 30S ribosomal subunit. Contacts proteins S8 and S17. May interact with IF1 in the 30S initiation complex.

Functionally, with S4 and S5 plays an important role in translational accuracy. Interacts with and stabilizes bases of the 16S rRNA that are involved in tRNA selection in the A site and with the mRNA backbone. Located at the interface of the 30S and 50S subunits, it traverses the body of the 30S subunit contacting proteins on the other side and probably holding the rRNA structure together. The combined cluster of proteins S8, S12 and S17 appears to hold together the shoulder and platform of the 30S subunit. The polypeptide is Small ribosomal subunit protein uS12 (Desulfovibrio desulfuricans (strain ATCC 27774 / DSM 6949 / MB)).